The chain runs to 69 residues: Large ribosomal subunit protein uL29 (69 aa).

Belongs to the universal ribosomal protein uL29 family.

The protein is Large ribosomal subunit protein uL29 of Clostridium perfringens (strain ATCC 13124 / DSM 756 / JCM 1290 / NCIMB 6125 / NCTC 8237 / Type A).